The following is a 303-amino-acid chain: Probable 5-dehydro-4-deoxyglucarate dehydratase (303 aa).

It belongs to the DapA family.

The catalysed reaction is 5-dehydro-4-deoxy-D-glucarate + H(+) = 2,5-dioxopentanoate + CO2 + H2O. The protein operates within carbohydrate acid metabolism; D-glucarate degradation; 2,5-dioxopentanoate from D-glucarate: step 2/2. In Variovorax paradoxus (strain S110), this protein is Probable 5-dehydro-4-deoxyglucarate dehydratase.